The sequence spans 235 residues: Transcriptional regulatory protein CseB (235 aa).

One can recognise a Response regulatory domain in the interval 6–119 (HVLFVEDDDV…VLVARIRAVL (114 aa)). Aspartate 55 is subject to 4-aspartylphosphate. Residues 141-235 (GGVLTFGELE…VRGFGYKLKA (95 aa)) constitute a DNA-binding region (ompR/PhoB-type).

In terms of processing, phosphorylated by CseC.

The protein resides in the cytoplasm. Member of the two-component regulatory system CseB/CseC involved in the stability of the cell envelope. CseB activates transcription of RNA polymerase sigma-E factor, in response to changes in the cell envelope. The protein is Transcriptional regulatory protein CseB (cseB) of Streptomyces avermitilis (strain ATCC 31267 / DSM 46492 / JCM 5070 / NBRC 14893 / NCIMB 12804 / NRRL 8165 / MA-4680).